The primary structure comprises 213 residues: NPVDDHQNDDHHDAPIVGHHDAFLKAEFDLTSLNADLEKFIHHEIEKEIHDVENHTEHNKHEIDALHLEIKQLHEEVEYFKSHHVAFSAELTHPIENLGAEEIAHFDKVRVNSGDAYHVDTGKFVAPEEGFFYFSVTICTKRDSILEMALHVNDHDEMIIHADAEHLELGCASNSEIVHLQKGDHVEVVKHGADGVPPFYIHTMSTFTGFMLH.

In terms of domain architecture, C1q spans 80-213; the sequence is FKSHHVAFSA…MSTFTGFMLH (134 aa).

In terms of tissue distribution, pallium, gill and liver.

The protein localises to the secreted. Binds heavy metals. May function as a carrier of divalent cations in plasma. The chain is Heavy metal-binding protein HIP from Mytilus edulis (Blue mussel).